The following is a 478-amino-acid chain: Membrane-bound lytic murein transglycosylase F (478 aa).

The N-terminal stretch at 1-29 (MFPDSSYLFSMRSLSRFLIAIFGCGALLA) is a signal peptide. Residues 30–269 (SCDSFERSVL…RLLDRYYGHI (240 aa)) are non-LT domain. The LT domain stretch occupies residues 271 to 478 (RLHHTDVNGI…RKEDDSWQEF (208 aa)). Residue glutamate 316 is part of the active site.

In the N-terminal section; belongs to the bacterial solute-binding protein 3 family. It in the C-terminal section; belongs to the transglycosylase Slt family.

The protein resides in the cell outer membrane. The catalysed reaction is Exolytic cleavage of the (1-&gt;4)-beta-glycosidic linkage between N-acetylmuramic acid (MurNAc) and N-acetylglucosamine (GlcNAc) residues in peptidoglycan, from either the reducing or the non-reducing ends of the peptidoglycan chains, with concomitant formation of a 1,6-anhydrobond in the MurNAc residue.. Its function is as follows. Murein-degrading enzyme that degrades murein glycan strands and insoluble, high-molecular weight murein sacculi, with the concomitant formation of a 1,6-anhydromuramoyl product. Lytic transglycosylases (LTs) play an integral role in the metabolism of the peptidoglycan (PG) sacculus. Their lytic action creates space within the PG sacculus to allow for its expansion as well as for the insertion of various structures such as secretion systems and flagella. This chain is Membrane-bound lytic murein transglycosylase F, found in Nitrosospira multiformis (strain ATCC 25196 / NCIMB 11849 / C 71).